A 370-amino-acid chain; its full sequence is Cytochrome b (370 aa).

Transmembrane regions (helical) follow at residues Phe25–Ile45, Trp69–Ile90, Trp105–Leu125, and Phe170–Val190. The heme b site is built by His75 and His89. Residues His174 and His188 each coordinate heme b. His193 is an a ubiquinone binding site. 4 helical membrane passes run Tyr218–Met238, Leu280–His300, Leu312–Thr332, and Phe339–Pro358.

The protein belongs to the cytochrome b family. As to quaternary structure, the cytochrome bc1 complex contains 3 respiratory subunits (MT-CYB, CYC1 and UQCRFS1), 2 core proteins (UQCRC1 and UQCRC2) and probably 6 low-molecular weight proteins. It depends on heme b as a cofactor.

The protein localises to the mitochondrion inner membrane. Its function is as follows. Component of the ubiquinol-cytochrome c reductase complex (complex III or cytochrome b-c1 complex) that is part of the mitochondrial respiratory chain. The b-c1 complex mediates electron transfer from ubiquinol to cytochrome c. Contributes to the generation of a proton gradient across the mitochondrial membrane that is then used for ATP synthesis. This Micropechis ikaheca (New Guinean small-eyed snake) protein is Cytochrome b (MT-CYB).